Reading from the N-terminus, the 488-residue chain is Intron-encoded DNA endonuclease I-AniI (488 aa).

The interval 1 to 169 (MRILKSHPLL…DIVEFIWGGL (169 aa)) is cobA exon 1 encoded. The interval 170 to 488 (YTDEPQCGDV…SEKIKIPSNY (319 aa)) is cobA intron encoded.

It in the C-terminal section; belongs to the LAGLIDADG endonuclease family. Homodimer. Requires Mg(2+) as cofactor. The mature protein may arise from proteolytic cleavage of an in-frame translation of cobA exon 1 plus intron, containing the I-AniI open reading frame. Cleavage may take place close to Met-213 resulting in an active endonuclease/maturase of about 30 kDa.

Its subcellular location is the mitochondrion. Functionally, mitochondrial DNA endonuclease and mRNA maturase involved in intron homing and required for splicing of the cytochrome b (cobA) gene intron, containing its own coding sequence. The protein stimulates the intrinsic ribozyme activity of the intron through binding to and stabilizing specific secondary and tertiary structure elements in the RNA. As an endonuclease it introduces a specific double-strand break at the junction of the two exons the cobA gene and thus mediates the insertion of an intron, containing its own coding sequence (group I intron), into an intronless gene. Recognizes with limited specificity and cleaves the sequence 5'-GAGGAGGTTTCTCTGTA-3'. The proteins RNA and DNA recognition and binding surfaces are independent. The sequence is that of Intron-encoded DNA endonuclease I-AniI (I-AniI) from Emericella nidulans (Aspergillus nidulans).